A 569-amino-acid polypeptide reads, in one-letter code: 2-succinyl-5-enolpyruvyl-6-hydroxy-3-cyclohexene-1-carboxylate synthase (569 aa).

It belongs to the TPP enzyme family. MenD subfamily. Homodimer. Mg(2+) serves as cofactor. It depends on Mn(2+) as a cofactor. The cofactor is thiamine diphosphate.

It catalyses the reaction isochorismate + 2-oxoglutarate + H(+) = 5-enolpyruvoyl-6-hydroxy-2-succinyl-cyclohex-3-ene-1-carboxylate + CO2. It participates in quinol/quinone metabolism; 1,4-dihydroxy-2-naphthoate biosynthesis; 1,4-dihydroxy-2-naphthoate from chorismate: step 2/7. Its pathway is quinol/quinone metabolism; menaquinone biosynthesis. Catalyzes the thiamine diphosphate-dependent decarboxylation of 2-oxoglutarate and the subsequent addition of the resulting succinic semialdehyde-thiamine pyrophosphate anion to isochorismate to yield 2-succinyl-5-enolpyruvyl-6-hydroxy-3-cyclohexene-1-carboxylate (SEPHCHC). The protein is 2-succinyl-5-enolpyruvyl-6-hydroxy-3-cyclohexene-1-carboxylate synthase of Shewanella halifaxensis (strain HAW-EB4).